The chain runs to 95 residues: Pyrimidine/purine nucleoside phosphorylase (95 aa).

It belongs to the nucleoside phosphorylase PpnP family.

It carries out the reaction a purine D-ribonucleoside + phosphate = a purine nucleobase + alpha-D-ribose 1-phosphate. It catalyses the reaction adenosine + phosphate = alpha-D-ribose 1-phosphate + adenine. The enzyme catalyses cytidine + phosphate = cytosine + alpha-D-ribose 1-phosphate. The catalysed reaction is guanosine + phosphate = alpha-D-ribose 1-phosphate + guanine. It carries out the reaction inosine + phosphate = alpha-D-ribose 1-phosphate + hypoxanthine. It catalyses the reaction thymidine + phosphate = 2-deoxy-alpha-D-ribose 1-phosphate + thymine. The enzyme catalyses uridine + phosphate = alpha-D-ribose 1-phosphate + uracil. The catalysed reaction is xanthosine + phosphate = alpha-D-ribose 1-phosphate + xanthine. Its function is as follows. Catalyzes the phosphorolysis of diverse nucleosides, yielding D-ribose 1-phosphate and the respective free bases. Can use uridine, adenosine, guanosine, cytidine, thymidine, inosine and xanthosine as substrates. Also catalyzes the reverse reactions. The protein is Pyrimidine/purine nucleoside phosphorylase of Yersinia enterocolitica serotype O:8 / biotype 1B (strain NCTC 13174 / 8081).